The chain runs to 111 residues: uncharacterized protein (111 aa).

The protein belongs to the asfivirus E111R family.

This is an uncharacterized protein from African swine fever virus (isolate Pig/Kenya/KEN-50/1950) (ASFV).